The primary structure comprises 447 residues: Ribosomal protein uS12 methylthiotransferase RimO (447 aa).

An MTTase N-terminal domain is found at 4 to 114 (PKVGFVSLGC…VMEAVHEYVP (111 aa)). Residues C13, C49, C78, C147, C151, and C154 each contribute to the [4Fe-4S] cluster site. The Radical SAM core domain maps to 133 to 370 (LTPKHYAYLK…MQVQQQISAA (238 aa)). The TRAM domain occupies 373–443 (QKRIGQTMTV…EYDLFAKLIK (71 aa)).

Belongs to the methylthiotransferase family. RimO subfamily. Requires [4Fe-4S] cluster as cofactor.

It is found in the cytoplasm. It carries out the reaction L-aspartate(89)-[ribosomal protein uS12]-hydrogen + (sulfur carrier)-SH + AH2 + 2 S-adenosyl-L-methionine = 3-methylsulfanyl-L-aspartate(89)-[ribosomal protein uS12]-hydrogen + (sulfur carrier)-H + 5'-deoxyadenosine + L-methionine + A + S-adenosyl-L-homocysteine + 2 H(+). In terms of biological role, catalyzes the methylthiolation of an aspartic acid residue of ribosomal protein uS12. The protein is Ribosomal protein uS12 methylthiotransferase RimO of Acinetobacter baumannii (strain AB307-0294).